The chain runs to 287 residues: Nucleotide-binding protein Asuc_0930 (287 aa).

Residue 8-15 participates in ATP binding; it reads GRSGAGKS. 56–59 lines the GTP pocket; sequence DIRN.

This sequence belongs to the RapZ-like family.

Functionally, displays ATPase and GTPase activities. This chain is Nucleotide-binding protein Asuc_0930, found in Actinobacillus succinogenes (strain ATCC 55618 / DSM 22257 / CCUG 43843 / 130Z).